The chain runs to 357 residues: Arginine kinase (357 aa).

Ala2 bears the N-acetylalanine mark. The Phosphagen kinase N-terminal domain maps to 9 to 91 (KLEEGFKKLQ…FDPIIEDYHK (83 aa)). 64–68 (GVGVY) lines the L-arginine pocket. The 238-residue stretch at 119–356 (FVISTRVRCG…LELIKIEKEM (238 aa)) folds into the Phosphagen kinase C-terminal domain. ATP-binding positions include 122–126 (STRVR) and His185. Glu225 lines the L-arginine pocket. Arg229 serves as a coordination point for ATP. Cys271 is an L-arginine binding site. Residues 280 to 284 (RASVH) and 309 to 314 (RGTRGE) contribute to the ATP site. Glu314 serves as a coordination point for L-arginine.

The protein belongs to the ATP:guanido phosphotransferase family.

The enzyme catalyses L-arginine + ATP = N(omega)-phospho-L-arginine + ADP + H(+). The sequence is that of Arginine kinase from Pachygrapsus marmoratus (Marbled rock crab).